A 163-amino-acid chain; its full sequence is Small ribosomal subunit protein bS18c (163 aa).

Disordered stretches follow at residues 1 to 54 (MYTS…PGDR) and 121 to 163 (ITGP…SSDC). A compositionally biased stretch (basic residues) spans 7 to 48 (PFHKSKQTFHKSKQTFRKSKQTFRKFKQPFRKPKQPFRRRPR). The segment covering 140 to 163 (NSNRNLRNSNQTLRNNNRNLSSDC) has biased composition (low complexity).

Belongs to the bacterial ribosomal protein bS18 family. As to quaternary structure, part of the 30S ribosomal subunit.

It localises to the plastid. The protein localises to the chloroplast. The protein is Small ribosomal subunit protein bS18c of Oryza nivara (Indian wild rice).